Consider the following 875-residue polypeptide: MADLVSSCKDKLAYFRIKELKDILNQLGLPKQGKKQDLIDRVLALLTDEQGQRHHGWGRKNSLTKEAVAKIVDDTYRKMQIQCAPDLATRSHSGSDFSFRPIEEAYDSFQPEAKVRCICSSTMVNDSMIQCEDQRCQVWQHLNCVLIPDKPGESAEVPPVFYCELCRLSRADPFWVTAGNPLLPVKFVSSGVTNDGTSVPQSVEKSFQLSRSDRETVQRQEYDLQVWCMLLNDKVQFRMQWPQYAELHVNGISVRVVTRPGSQLLGINGRDDGPLITTCSREGINKICLSRVDARTFCFGVRIAKRRTVAQVLNLVPKEAEGESFEHALARVRRCLGGGDTAENADSDSDLEVVAESVTVNLRCPNSGSRMRIAGRFKPCIHMGCFDLETFVELNQRSRKWQCPICLKNYSLESLMIDPYFNRITSLLRNCNEDVNEVDVKPDGSWRVKGDAASRELSQWHMPDGTLCNPKEDVKPAMQNGNEQMMEGTSDGQKSLKIGIKRNPNGIWEVSSKADDKKPSVVGNRMQNNSGFRALNNIMHMSNSPTSSYRDGEDPSVNQESNRHVDLSLNNGNNEFDSFSLNFGQACNTDDRPQQQHNATDVIVLSDSDEENDAMVCPPAVYDNTTTANGSGFPFTTNGIGYTERYQEDAGVGTSGLGLLSNNVDDFEMNNWQMHSSYQQPEQGFQFFGNDTDVHNTFVGSHNSFGLAPNDYSLDCNVGVEEASVTPALSVCRNSNEMHGSLVDNPLALVGDDPSLQIFLPSQPSSVPLQEELSERANAPNGVQSDDWISLTLAAGGGGNEEPAPADVNSQPQIPSTETGIEPLTDAASAFLSTNIERRSGADLNPRRIENIFSHPRQPRSVRPRLCLSIDTDSE.

The SAP domain occupies 12-46; sequence LAYFRIKELKDILNQLGLPKQGKKQDLIDRVLALL. The segment at 114-169 adopts a PHD-type zinc-finger fold; sequence KVRCICSSTMVNDSMIQCEDQRCQVWQHLNCVLIPDKPGESAEVPPVFYCELCRLS. The segment at 349 to 430 adopts an SP-RING-type zinc-finger fold; that stretch reads SDLEVVAESV…FNRITSLLRN (82 aa). Residues Cys-380, His-382, Cys-403, and Cys-406 each coordinate Zn(2+). A disordered region spans residues 796–820; it reads GGGGNEEPAPADVNSQPQIPSTETG. Positions 808-819 are enriched in polar residues; sequence VNSQPQIPSTET.

It belongs to the PIAS family.

The protein localises to the nucleus. It functions in the pathway protein modification; protein sumoylation. In terms of biological role, probable SUMO E3 ligase that may regulate Pi starvation responses. In Oryza sativa subsp. japonica (Rice), this protein is E3 SUMO-protein ligase SIZ1 (SIZ1).